A 32-amino-acid chain; its full sequence is MSDINATRLPHLVRYPPYVGDGTDLTLNRGEK.

A propeptide spanning residues 1–10 (MSDINATRLP) is cleaved from the precursor. A cross-link (cyclopeptide (His-Pro)) is located at residues 11–17 (HLVRYPP). Positions 18–32 (YVGDGTDLTLNRGEK) are excised as a propeptide.

This sequence belongs to the MSDIN fungal toxin family. In terms of processing, processed by the macrocyclase-peptidase enzyme POPB to yield a toxic cyclic heptapeptide. POPB first removes 10 residues from the N-terminus. Conformational trapping of the remaining peptide forces the enzyme to release this intermediate rather than proceed to macrocyclization. The enzyme rebinds the remaining peptide in a different conformation and catalyzes macrocyclization of the N-terminal 7 residues.

Functionally, probable toxin that belongs to the MSDIN-like toxin family responsible for a large number of food poisoning cases and deaths. This Amanita fuligineoides protein is MSDIN-like toxin proprotein 2.